A 647-amino-acid chain; its full sequence is Serine/threonine-protein kinase PLK3 (647 aa).

Residues 1–56 form a disordered region; the sequence is MEPAAGFLSPRPFPRAAAPSSPPAGPGPPASASPRSEPGVLAGPQTPDASRLITDP. Over residues 20–31 the composition is skewed to pro residues; the sequence is SSPPAGPGPPAS. Residues 62–314 enclose the Protein kinase domain; sequence YIKGRLLGKG…IEQILRHDFF (253 aa). ATP-binding positions include 68-76 and Lys-91; that span reads LGKGGFARC. Asp-185 (proton acceptor) is an active-site residue. 2 POLO box domains span residues 464–542 and 563–646; these read WVSK…YMEQ and LLLQ…DRSP.

The protein belongs to the protein kinase superfamily. Ser/Thr protein kinase family. CDC5/Polo subfamily. As to quaternary structure, interacts with GOLGB1. Interacts (via the POLO-box domain) with CIB1; leading to inhibit PLK3 kinase activity. Phosphorylated in an ATM-dependent manner following DNA damage. Phosphorylated as cells enter mitosis and dephosphorylated as cells exit mitosis. As to expression, constitutively expressed in post-mitotic neurons.

Its subcellular location is the cell projection. The protein resides in the dendrite. It is found in the cytoplasm. The protein localises to the nucleus. It localises to the nucleolus. Its subcellular location is the golgi apparatus. The protein resides in the cytoskeleton. It is found in the microtubule organizing center. The protein localises to the centrosome. It catalyses the reaction L-seryl-[protein] + ATP = O-phospho-L-seryl-[protein] + ADP + H(+). The enzyme catalyses L-threonyl-[protein] + ATP = O-phospho-L-threonyl-[protein] + ADP + H(+). In terms of biological role, serine/threonine-protein kinase involved in cell cycle regulation, response to stress and Golgi disassembly. Polo-like kinases act by binding and phosphorylating proteins that are already phosphorylated on a specific motif recognized by the POLO box domains. Phosphorylates ATF2, BCL2L1, CDC25A, CDC25C, CHEK2, HIF1A, JUN, p53/TP53, p73/TP73, PTEN, TOP2A and VRK1. Involved in cell cycle regulation: required for entry into S phase and cytokinesis. Phosphorylates BCL2L1, leading to regulate the G2 checkpoint and progression to cytokinesis during mitosis. Plays a key role in response to stress: rapidly activated upon stress stimulation, such as ionizing radiation, reactive oxygen species (ROS), hyperosmotic stress, UV irradiation and hypoxia. Involved in DNA damage response and G1/S transition checkpoint by phosphorylating CDC25A, p53/TP53 and p73/TP73. Phosphorylates p53/TP53 in response to reactive oxygen species (ROS), thereby promoting p53/TP53-mediated apoptosis. Phosphorylates CHEK2 in response to DNA damage, promoting the G2/M transition checkpoint. Phosphorylates the transcription factor p73/TP73 in response to DNA damage, leading to inhibit p73/TP73-mediated transcriptional activation and pro-apoptotic functions. Phosphorylates HIF1A and JUN is response to hypoxia. Phosphorylates ATF2 following hyperosmotic stress in corneal epithelium. Also involved in Golgi disassembly during the cell cycle: part of a MEK1/MAP2K1-dependent pathway that induces Golgi fragmentation during mitosis by mediating phosphorylation of VRK1. May participate in endomitotic cell cycle, a form of mitosis in which both karyokinesis and cytokinesis are interrupted and is a hallmark of megakaryocyte differentiation, via its interaction with CIB1. This Rattus norvegicus (Rat) protein is Serine/threonine-protein kinase PLK3 (Plk3).